Here is a 366-residue protein sequence, read N- to C-terminus: Peptide chain release factor 2 (366 aa).

The residue at position 246 (Gln246) is an N5-methylglutamine.

This sequence belongs to the prokaryotic/mitochondrial release factor family. Post-translationally, methylated by PrmC. Methylation increases the termination efficiency of RF2.

It localises to the cytoplasm. Peptide chain release factor 2 directs the termination of translation in response to the peptide chain termination codons UGA and UAA. This is Peptide chain release factor 2 from Frankia casuarinae (strain DSM 45818 / CECT 9043 / HFP020203 / CcI3).